A 401-amino-acid chain; its full sequence is Nicotinate phosphoribosyltransferase (401 aa).

His-221 bears the Phosphohistidine; by autocatalysis mark.

It belongs to the NAPRTase family. Post-translationally, transiently phosphorylated on a His residue during the reaction cycle. Phosphorylation strongly increases the affinity for substrates and increases the rate of nicotinate D-ribonucleotide production. Dephosphorylation regenerates the low-affinity form of the enzyme, leading to product release.

The catalysed reaction is nicotinate + 5-phospho-alpha-D-ribose 1-diphosphate + ATP + H2O = nicotinate beta-D-ribonucleotide + ADP + phosphate + diphosphate. The protein operates within cofactor biosynthesis; NAD(+) biosynthesis; nicotinate D-ribonucleotide from nicotinate: step 1/1. In terms of biological role, catalyzes the synthesis of beta-nicotinate D-ribonucleotide from nicotinate and 5-phospho-D-ribose 1-phosphate at the expense of ATP. This chain is Nicotinate phosphoribosyltransferase, found in Yersinia enterocolitica serotype O:8 / biotype 1B (strain NCTC 13174 / 8081).